The following is a 560-amino-acid chain: MWHVFSQYTLIFLLLIVIAVPLGKYLYVAFFEKGKIDRFFSPIEAVIYRLSGIRSLEEMTWKSYCTALLIVNAALLGISYGLLRIQHYLPLNGAKVENMEPTLTFNTVVSFMTNTNLQHYSGESGLSILSQMLFVTMMMFTSAATGLTVATALIRALSKKGKTIGNFYQDFVRANVRVLLPLSVIVTILLVAFGVPQTFLARMAVSTLEGGTQTLALGPVASLESIKHLGTNGGGFFGANSSHPFENPHPFTNVIEMLSMWCIPAALPFTYGHAVKNRKQGWVLFATMFVLFVMMLGVVYNAEQSGNPLVGKSGFAADQGNMEGKEVRFGIPLSSLFTAITTAATTGSVNNMHDSLTPIGGLVPLALMMLNNVFGGDGVGFVNIMMYAMIAVFLSGLMVGRTPEFLGRKIEPKEMKLIVIALLLHPLIILAPSAIALMTHMGTEAISNPGFHGISQVVYEYTSSAANNGSGFEGLKDNTAFWNISTGVVMLLGRYVSIIAMLAVAGSLVGKQPVPETIGTFRTDTATFGVILFGTVFIIGALTFFPVLILGPVAEYLTIR.

A run of 12 helical transmembrane segments spans residues 11 to 31, 63 to 83, 134 to 154, 179 to 199, 254 to 274, 282 to 302, 329 to 349, 356 to 376, 379 to 399, 417 to 437, 488 to 508, and 530 to 550; these read IFLL…VAFF, SYCT…YGLL, FVTM…TALI, LLPL…PQTF, VIEM…YGHA, WVLF…VYNA, FGIP…TGSV, LTPI…VFGG, VGFV…GLMV, LIVI…AIAL, VVML…AGSL, and VILF…VLIL.

This sequence belongs to the KdpA family. The system is composed of three essential subunits: KdpA, KdpB and KdpC.

It is found in the cell membrane. In terms of biological role, part of the high-affinity ATP-driven potassium transport (or Kdp) system, which catalyzes the hydrolysis of ATP coupled with the electrogenic transport of potassium into the cytoplasm. This subunit binds the extracellular potassium ions and delivers the ions to the membrane domain of KdpB through an intramembrane tunnel. In Geobacillus kaustophilus (strain HTA426), this protein is Potassium-transporting ATPase potassium-binding subunit.